A 123-amino-acid polypeptide reads, in one-letter code: UPF0102 protein PSPPH_4120 (123 aa).

This sequence belongs to the UPF0102 family.

The polypeptide is UPF0102 protein PSPPH_4120 (Pseudomonas savastanoi pv. phaseolicola (strain 1448A / Race 6) (Pseudomonas syringae pv. phaseolicola (strain 1448A / Race 6))).